The primary structure comprises 438 residues: Glutamate-1-semialdehyde 2,1-aminomutase (438 aa).

Position 274 is an N6-(pyridoxal phosphate)lysine (Lys274).

Belongs to the class-III pyridoxal-phosphate-dependent aminotransferase family. HemL subfamily. Homodimer. The cofactor is pyridoxal 5'-phosphate.

It is found in the cytoplasm. The catalysed reaction is (S)-4-amino-5-oxopentanoate = 5-aminolevulinate. Its pathway is porphyrin-containing compound metabolism; protoporphyrin-IX biosynthesis; 5-aminolevulinate from L-glutamyl-tRNA(Glu): step 2/2. The chain is Glutamate-1-semialdehyde 2,1-aminomutase from Salinibacter ruber (strain DSM 13855 / M31).